The following is a 552-amino-acid chain: Urocanate hydratase (552 aa).

Residues 49-50 (GG), glutamine 127, 173-175 (GMG), glutamate 193, arginine 198, 239-240 (NA), 260-264 (QTSAH), 270-271 (YV), and tyrosine 319 contribute to the NAD(+) site. Cysteine 407 is an active-site residue. Glycine 489 contributes to the NAD(+) binding site.

Belongs to the urocanase family. Composed of at least two subunits. NAD(+) is required as a cofactor.

Its subcellular location is the cytoplasm. The enzyme catalyses 4-imidazolone-5-propanoate = trans-urocanate + H2O. Its pathway is amino-acid degradation; L-histidine degradation into L-glutamate; N-formimidoyl-L-glutamate from L-histidine: step 2/3. Catalyzes the conversion of urocanate to 4-imidazolone-5-propionate. The sequence is that of Urocanate hydratase from Bacillus subtilis (strain 168).